Here is a 655-residue protein sequence, read N- to C-terminus: Methyl-accepting chemotaxis protein McpC (655 aa).

At 1–8 the chain is on the cytoplasmic side; sequence MFKKLHMK. The helical transmembrane segment at 9-29 threads the bilayer; that stretch reads IAVFVSIMLIITVVLLMLSSY. The Extracellular segment spans residues 30 to 276; that stretch reads LTLKPMITED…LMWISDKMNR (247 aa). In terms of domain architecture, Cache spans 148–225; the sequence is WTEPYKDVVT…SNQGKNISKD (78 aa). Residues 277 to 297 form a helical membrane-spanning segment; that stretch reads ANLWISLIALIITIILSYFLA. Residues 298–350 form the HAMP domain; it reads KTITGPIQQLIVKTKAVSAGDLTVRAESKSKDEVGILTRDFNLMVENMKEMVE. At 298-655 the chain is on the cytoplasmic side; sequence KTITGPIQQL…LMNTIAKFTL (358 aa). A Methyl-accepting transducer domain is found at 369–619; sequence VAAETNETSG…ESAAAAEEVN (251 aa).

Belongs to the methyl-accepting chemotaxis (MCP) protein family. As to quaternary structure, interacts with FloT. Some glutamine residues are deamidated to glutamate by CheD and subsequently methylated.

It localises to the cell membrane. The protein resides in the membrane raft. In terms of biological role, chemotactic-signal transducers respond to changes in the concentration of attractants and repellents in the environment, transduce a signal from the outside to the inside of the cell, and facilitate sensory adaptation through the variation of the level of methylation. All amino acids serve as attractants in B.subtilis, they appear to cause an increase in the turnover methyl groups, leading to methylation of an unidentified acceptor, while repellents have been shown to cause a decrease in methyl group turnover. The methyl groups are added by a methyltransferase and removed by a methylesterase. McpC is required for taxis to cysteine, proline, threonine, glycine, serine, lysine, valine and arginine and for aspartate, glutamine, histidine and glutamate. Primarily mediates response to positive stimulus of PTS carbohydrates. Greatly influences the duration or magnitude of the response to negative PTS carbohydrate stimulus. The protein is Methyl-accepting chemotaxis protein McpC (mcpC) of Bacillus subtilis (strain 168).